The chain runs to 298 residues: O-glycoside alpha-1,2-mannosyltransferase homolog 6 (298 aa).

The active-site Nucleophile is Glu220.

The protein belongs to the glycosyltransferase 15 family.

It is found in the cytoplasm. The protein localises to the nucleus. Functionally, probable mannosyltransferase involved in O-glycosylation of cell wall and secreted proteins. The protein is O-glycoside alpha-1,2-mannosyltransferase homolog 6 (omh6) of Schizosaccharomyces pombe (strain 972 / ATCC 24843) (Fission yeast).